A 67-amino-acid polypeptide reads, in one-letter code: Large ribosomal subunit protein bL35 (67 aa).

Belongs to the bacterial ribosomal protein bL35 family.

This is Large ribosomal subunit protein bL35 from Dehalococcoides mccartyi (strain ATCC BAA-2266 / KCTC 15142 / 195) (Dehalococcoides ethenogenes (strain 195)).